The following is a 244-amino-acid chain: Ribonuclease P protein component 3 (244 aa).

Belongs to the eukaryotic/archaeal RNase P protein component 3 family. Consists of a catalytic RNA component and at least 4-5 protein subunits.

It is found in the cytoplasm. The catalysed reaction is Endonucleolytic cleavage of RNA, removing 5'-extranucleotides from tRNA precursor.. Part of ribonuclease P, a protein complex that generates mature tRNA molecules by cleaving their 5'-ends. The chain is Ribonuclease P protein component 3 from Methanopyrus kandleri (strain AV19 / DSM 6324 / JCM 9639 / NBRC 100938).